Here is a 1079-residue protein sequence, read N- to C-terminus: MSRPNTRNKSKRPRADDCESPSAVFKKIHSTGAITKGDIKQLYMVWKPVCHGCHGNSKDSPNCFCGLIPAANGVRKSGLWQRTNEIIRALGPNPSTDLRDSTETPAGLTNLGATCYANSILQCLYMNTSFRLGIFSLEPDILKMHPVLDQLARLFAQLHSSKMAFIDSAPFIKTLELDNGVQQDSHEFLTLFLSLLEGSLSHSKVPGARTIVQHLFRGSVSHVTRCSSCGRDSEASSKMEDFYELELNIKGLNNLEQSLDDYLSTEALDGENQYFCESCQKRVDATRCIKLRSLPPVVNFQLKRYVFLPKTTTKKKISSAFSFPGQLDMGKRLSNPSSSYTYGLSAILIHKGSAANSGHYVAHVKDESNGQWWEFDDEHVSKLGLHPFGEKPGKSSDKTDQKPQGSSTADSVTNDDNNSCHEAAFTSTMEEMFSSTDAYMLMYKRIAKDENGIESNNISSNNSLPHHFVDEIDERNTSYVKECEEYESKKDVHLAYITERRQEVKSVLTEAPATPEEDSYFWISTDWLRQWADNVNPPSPIITGVRVHSSIDNSPIQCEHGKVPASKVTSMKRLSAGAWHKLFSKYGGGPTLSSDDFCMECLKDGAKNSVSADVYRDRKASLRSIAEAALAGNNPDGPLYFVSRPWLTQWLRRKNVDIPSDADSGPTIALTCTHGNLLPEHASGAKRVTVPEDLWLFLYETSGMKIDDIVTFPSDSQPCGICSQQLSVVASVEDNLRAVKLKQRQSHEKLTSGKSLALHPGQKYYLVPSSWLSEWRAYITATGKNISSLPEPQSLEVTINSLICEKHSRLLQRPLDLVCKRGTITQKASNTDGLTMISESDWILFSEEWNVAHGKGLCAEIVFSKSSQDNLQSSEAVPILVEDLDQSTNDLSNDLGGREPYVRTDPEVCEECIGEKESCALVEKLNYQNEDIQVYLVRGKEAPKSIREASAAVPVPDRRTSKRSRRTTSGNSISLKVSGSTTVYQLKLMIWESLGIVKENQELHKGSVEIEDDFATLADKCIFPGDVLWVKDSEIYENRDIADEISEQKVVVQTEEGFRGTLLTSSASAQLCQDISFSD.

The span at 1–12 (MSRPNTRNKSKR) shows a compositional bias: basic residues. The tract at residues 1–21 (MSRPNTRNKSKRPRADDCESP) is disordered. The region spanning 106-446 (AGLTNLGATC…DAYMLMYKRI (341 aa)) is the USP domain. Catalysis depends on Cys115, which acts as the Nucleophile. The active-site Proton acceptor is the His359. Residues 384–419 (GLHPFGEKPGKSSDKTDQKPQGSSTADSVTNDDNNS) are disordered. Basic and acidic residues predominate over residues 388-401 (FGEKPGKSSDKTDQ). Positions 402-417 (KPQGSSTADSVTNDDN) are enriched in polar residues. DUSP domains lie at 495–598 (AYIT…DDFC), 613–715 (DVYR…FPSD), and 738–862 (AVKL…AEIV). The interval 948–972 (EASAAVPVPDRRTSKRSRRTTSGNS) is disordered. The Ubiquitin-like domain maps to 961-1037 (SKRSRRTTSG…LWVKDSEIYE (77 aa)).

It belongs to the peptidase C19 family.

The protein localises to the nucleus. The enzyme catalyses Thiol-dependent hydrolysis of ester, thioester, amide, peptide and isopeptide bonds formed by the C-terminal Gly of ubiquitin (a 76-residue protein attached to proteins as an intracellular targeting signal).. Functionally, recognizes and hydrolyzes the peptide bond at the C-terminal Gly of ubiquitin. Involved in the processing of poly-ubiquitin precursors as well as that of ubiquitinated proteins. Deubiquitinates H2BK143ub1 of histone H2B. This chain is Ubiquitin carboxyl-terminal hydrolase 26 (UBP26), found in Oryza sativa subsp. japonica (Rice).